The sequence spans 351 residues: Phospho-N-acetylmuramoyl-pentapeptide-transferase (351 aa).

The next 10 membrane-spanning stretches (helical) occupy residues 17 to 37, 62 to 82, 85 to 105, 130 to 150, 158 to 178, 190 to 210, 230 to 250, 254 to 274, 279 to 299, and 328 to 348; these read MAYATIFAFLLSLIVGPYIIL, GIPTMGGILIFFCVFISLVFW, ILNVYFLIMVFVMLGFAFLGF, IIFSFFSVGILYYFGGEHVSV, SFQIDLGLFYIPFGMFILISA, GLAIGLSIVITGALIIIAYLT, LVIFLGALLGGSFGFLWFNAY, IMMGDTGSLALGAILGMAALI, ILFSILAGVFIIETMSVIIQV, and QVVIRFWIIGLIFAIIALSTI.

The protein belongs to the glycosyltransferase 4 family. MraY subfamily. It depends on Mg(2+) as a cofactor.

The protein resides in the cell inner membrane. It catalyses the reaction UDP-N-acetyl-alpha-D-muramoyl-L-alanyl-gamma-D-glutamyl-meso-2,6-diaminopimeloyl-D-alanyl-D-alanine + di-trans,octa-cis-undecaprenyl phosphate = di-trans,octa-cis-undecaprenyl diphospho-N-acetyl-alpha-D-muramoyl-L-alanyl-D-glutamyl-meso-2,6-diaminopimeloyl-D-alanyl-D-alanine + UMP. It functions in the pathway cell wall biogenesis; peptidoglycan biosynthesis. Catalyzes the initial step of the lipid cycle reactions in the biosynthesis of the cell wall peptidoglycan: transfers peptidoglycan precursor phospho-MurNAc-pentapeptide from UDP-MurNAc-pentapeptide onto the lipid carrier undecaprenyl phosphate, yielding undecaprenyl-pyrophosphoryl-MurNAc-pentapeptide, known as lipid I. The chain is Phospho-N-acetylmuramoyl-pentapeptide-transferase from Borreliella burgdorferi (strain ATCC 35210 / DSM 4680 / CIP 102532 / B31) (Borrelia burgdorferi).